A 64-amino-acid polypeptide reads, in one-letter code: Phylloxin-S1 (64 aa).

The signal sequence occupies residues 1 to 22; the sequence is MVFLKKSLLLVLFVGLVSLSIC. The propeptide occupies 23–44; sequence EENKREEHEEVEENAEKAEEKR. Q63 bears the Glutamine amide mark.

In terms of tissue distribution, expressed by the skin glands.

It localises to the secreted. Functionally, antimicrobial peptide against both Gram-positive and Gram-negative bacteria. This is Phylloxin-S1 from Phyllomedusa sauvagei (Sauvage's leaf frog).